Reading from the N-terminus, the 105-residue chain is Thiosulfate sulfurtransferase GlpE (105 aa).

Positions 15 to 103 (MQQGAILVDI…WCRAELPIDT (89 aa)) constitute a Rhodanese domain. Catalysis depends on cysteine 63, which acts as the Cysteine persulfide intermediate.

This sequence belongs to the GlpE family.

Its subcellular location is the cytoplasm. The catalysed reaction is thiosulfate + hydrogen cyanide = thiocyanate + sulfite + 2 H(+). It catalyses the reaction thiosulfate + [thioredoxin]-dithiol = [thioredoxin]-disulfide + hydrogen sulfide + sulfite + 2 H(+). Transferase that catalyzes the transfer of sulfur from thiosulfate to thiophilic acceptors such as cyanide or dithiols. May function in a CysM-independent thiosulfate assimilation pathway by catalyzing the conversion of thiosulfate to sulfite, which can then be used for L-cysteine biosynthesis. The polypeptide is Thiosulfate sulfurtransferase GlpE (Haemophilus influenzae (strain 86-028NP)).